The following is a 147-amino-acid chain: uncharacterized protein (147 aa).

The region spanning 52-145 (YDRCLLIIDA…WLSNNYPTVC (94 aa)) is the Rhodanese domain.

This is an uncharacterized protein from Buchnera aphidicola subsp. Baizongia pistaciae (strain Bp).